The following is a 104-amino-acid chain: U-scoloptoxin(10)-Cw1a (104 aa).

The N-terminal stretch at 1–23 (MNKTVAVFFAVICVICVIKSCKT) is a signal peptide.

Belongs to the scoloptoxin-10 family. In terms of processing, contains 3 disulfide bonds. Expressed by the venom gland.

The protein resides in the secreted. This chain is U-scoloptoxin(10)-Cw1a, found in Cormocephalus westwoodi (Westwood's green centipede).